Consider the following 406-residue polypeptide: GTPase Obg (406 aa).

The Obg domain occupies 1–159; the sequence is MKFVDEVSIH…RDLKLELKVL (159 aa). Positions 127 to 148 are disordered; that stretch reads NTRFKSSTNRAPRQTTPGKPGE. The span at 129-143 shows a compositional bias: polar residues; that stretch reads RFKSSTNRAPRQTTP. Residues 160-334 form the OBG-type G domain; that stretch reads ADVGLLGLPN…LSQDIMRYLD (175 aa). GTP-binding positions include 166-173, 191-195, 213-216, 283-286, and 315-317; these read GLPNAGKS, FTTLV, DIPG, NKMD, and SAL. Mg(2+)-binding residues include S173 and T193. The interval 378-406 is disordered; that stretch reads GLKNAGAADDDDFDDEEDDGDGPEIFYVP. The segment covering 385–399 has biased composition (acidic residues); sequence ADDDDFDDEEDDGDG.

This sequence belongs to the TRAFAC class OBG-HflX-like GTPase superfamily. OBG GTPase family. Monomer. Mg(2+) serves as cofactor.

The protein resides in the cytoplasm. In terms of biological role, an essential GTPase which binds GTP, GDP and possibly (p)ppGpp with moderate affinity, with high nucleotide exchange rates and a fairly low GTP hydrolysis rate. Plays a role in control of the cell cycle, stress response, ribosome biogenesis and in those bacteria that undergo differentiation, in morphogenesis control. The chain is GTPase Obg from Pseudomonas paraeruginosa (strain DSM 24068 / PA7) (Pseudomonas aeruginosa (strain PA7)).